A 129-amino-acid polypeptide reads, in one-letter code: MPSYRQARLAEFLRDEIAAIIQRELRDPRLGFVSVTRVEMSPDLRHAKVFVSIYGSHEEQEAALEALQGAAGFIRRLIAPHLHTRHIPELHFKLDRSLEHAEQVARLLRQIQQERQRDESAVESTPESE.

The protein belongs to the RbfA family. As to quaternary structure, monomer. Binds 30S ribosomal subunits, but not 50S ribosomal subunits or 70S ribosomes.

It localises to the cytoplasm. Functionally, one of several proteins that assist in the late maturation steps of the functional core of the 30S ribosomal subunit. Associates with free 30S ribosomal subunits (but not with 30S subunits that are part of 70S ribosomes or polysomes). Required for efficient processing of 16S rRNA. May interact with the 5'-terminal helix region of 16S rRNA. This chain is Ribosome-binding factor A, found in Thermomicrobium roseum (strain ATCC 27502 / DSM 5159 / P-2).